Reading from the N-terminus, the 894-residue chain is MTDVTVKSLAAEIQTPVDRLVQQFADAGIDKTAVDSVTQQEKETLLAHLNRDRGAAPNKLTLQRKTRSTLNIPSTGGKSKSVQIEVRKKRTYVQRDPQAQEQAEAEEQARREAEELAQHQVQRDAEEKAKRAAEDKAKREAAEQAKRVAAESDKLTNQQTNTMTKSPQATEKARREAEAAELRRKAEEETRRKVEEKARQVAEEARRMAEERGGNWDNAPEPAEEDTTDYHVNTSHHAREAEDENDRKVEGDRRSRTRGGKATKQKKTSRLSESKADREEARAVGRGGKGKRRPSTLTQGFNKPAQAVNRDVVIGETITVAELANKMAVKGSQVIKAMMKLGAMATINQVIDQETAQLVAEEMGHKVILRRENELEESVMSDRDTGSSAAAESRAPVVTIMGHVDHGKTSLLDYIRSTKVAAGEAGGITQHIGAYHVETDNGMITFLDTPGHAAFTAMRARGAQATDIVVLVVAADDGVMPQTIEAIQHAKAAKVPVVVAVNKIDKPEADPDRVKNELTQYGVIPEEWGGESQFVHVSAKSGAGIDELLDAILLQAEVLELKAIRNGMASGVVIESFLDKGRGPVATVLVREGTLNRGDIVLCGFEYGRVRAMRDEVGRDVASAGPSIPVEILGLSGVPAAGDEATVVRDEKKAREVALYRQGKFREVKLARQQKSKLENMFANMTEGEVSELNIVLKSDVQGSAEAISDALEKLSNDEVKVKIVGSGVGGITETDATLAAASNAILLGFNVRADASARRVIEAENLDLRYYSVIYDLIDEVKQAMSGMLAPEYKQEIIGLAEVRNVFRSPKFGAIAGCMVTEGVVKRHNKIRVLRENVVIYEGELESLRRFKDDVNEVRNGMECGIGVKNYNDVRSGDVIEVFETIEIQRTIA.

Positions 52-301 (DRGAAPNKLT…RRPSTLTQGF (250 aa)) are disordered. A compositionally biased stretch (polar residues) spans 68-82 (STLNIPSTGGKSKSV). Positions 107–154 (EQARREAEELAQHQVQRDAEEKAKRAAEDKAKREAAEQAKRVAAESDK) are enriched in basic and acidic residues. Positions 155-168 (LTNQQTNTMTKSPQ) are enriched in polar residues. 2 stretches are compositionally biased toward basic and acidic residues: residues 171 to 214 (EKAR…ERGG) and 237 to 254 (HARE…GDRR). Positions 255–269 (SRTRGGKATKQKKTS) are enriched in basic residues. Positions 270–283 (RLSESKADREEARA) are enriched in basic and acidic residues. Residues 393 to 562 (SRAPVVTIMG…LLQAEVLELK (170 aa)) form the tr-type G domain. The tract at residues 402-409 (GHVDHGKT) is G1. 402–409 (GHVDHGKT) provides a ligand contact to GTP. Positions 427–431 (GITQH) are G2. Positions 448–451 (DTPG) are G3. GTP is bound by residues 448-452 (DTPGH) and 502-505 (NKID). The segment at 502–505 (NKID) is G4. Residues 538–540 (SAK) are G5.

It belongs to the TRAFAC class translation factor GTPase superfamily. Classic translation factor GTPase family. IF-2 subfamily.

The protein localises to the cytoplasm. In terms of biological role, one of the essential components for the initiation of protein synthesis. Protects formylmethionyl-tRNA from spontaneous hydrolysis and promotes its binding to the 30S ribosomal subunits. Also involved in the hydrolysis of GTP during the formation of the 70S ribosomal complex. This chain is Translation initiation factor IF-2, found in Sodalis glossinidius (strain morsitans).